Here is a 212-residue protein sequence, read N- to C-terminus: Cyclin-dependent kinase inhibitor 3 (212 aa).

The segment covering 1–12 (MKPPSSIQTSEF) has biased composition (polar residues). The disordered stretch occupies residues 1–20 (MKPPSSIQTSEFDSSDEEPI). Residues 1–34 (MKPPSSIQTSEFDSSDEEPIEDEQTPIHISWLSL) form an interaction with CDK2 region. Positions 33 to 201 (SLSRVNCSQF…FRDKLAAHLS (169 aa)) constitute a Tyrosine-protein phosphatase domain. Cys-140 serves as the catalytic Phosphocysteine intermediate.

This sequence belongs to the protein-tyrosine phosphatase family. As to quaternary structure, interacts with cyclin-dependent kinases such as CDK1, CDK2 and CDK3. Does not interact with CDK4. Interacts (via C-terminus) with phosphorylated CDK2 (via C-terminal helix). Interacts with MS4A3 (via C-terminus); the interaction enhances CDKN3 enzymatic activity.

The protein localises to the cytoplasm. Its subcellular location is the perinuclear region. The catalysed reaction is O-phospho-L-tyrosyl-[protein] + H2O = L-tyrosyl-[protein] + phosphate. It catalyses the reaction O-phospho-L-threonyl-[protein] + H2O = L-threonyl-[protein] + phosphate. It carries out the reaction O-phospho-L-seryl-[protein] + H2O = L-seryl-[protein] + phosphate. Functionally, may play a role in cell cycle regulation. Dual specificity CC phosphatase active toward substrates containing either phosphotyrosine or phosphoserine residues. Dephosphorylates CDK2 at 'Thr-160' in a cyclin-dependent manner. This is Cyclin-dependent kinase inhibitor 3 from Homo sapiens (Human).